The sequence spans 353 residues: DNA-directed RNA polymerase subunit alpha (353 aa).

Positions 1–234 are alpha N-terminal domain (alpha-NTD); the sequence is MVQEKVRVST…DLFIPFLHTE (234 aa). Residues 266-353 form an alpha C-terminal domain (alpha-CTD) region; that stretch reads KKIALKSIFI…LAQSIYSESG (88 aa).

It belongs to the RNA polymerase alpha chain family. In plastids the minimal PEP RNA polymerase catalytic core is composed of four subunits: alpha, beta, beta', and beta''. When a (nuclear-encoded) sigma factor is associated with the core the holoenzyme is formed, which can initiate transcription.

It is found in the plastid. The protein localises to the chloroplast. It catalyses the reaction RNA(n) + a ribonucleoside 5'-triphosphate = RNA(n+1) + diphosphate. DNA-dependent RNA polymerase catalyzes the transcription of DNA into RNA using the four ribonucleoside triphosphates as substrates. The chain is DNA-directed RNA polymerase subunit alpha from Panax ginseng (Korean ginseng).